The primary structure comprises 227 residues: Ion-translocating oxidoreductase complex subunit E (227 aa).

5 consecutive transmembrane segments (helical) span residues 34–56, 68–88, 91–111, 127–147, and 181–201; these read AINA…TIIS, IPIY…LLHA, FNLY…CIIV, FFDG…VGSI, and TIIL…LIAI.

The protein belongs to the NqrDE/RnfAE family. In terms of assembly, the complex is composed of six subunits: RnfA, RnfB, RnfC, RnfD, RnfE and RnfG.

It is found in the cell inner membrane. In terms of biological role, part of a membrane-bound complex that couples electron transfer with translocation of ions across the membrane. In Buchnera aphidicola subsp. Acyrthosiphon pisum (strain 5A), this protein is Ion-translocating oxidoreductase complex subunit E.